A 442-amino-acid polypeptide reads, in one-letter code: Urokinase-type plasminogen activator (442 aa).

Positions 1–20 (MRVLRACLSLCVLVVSDSKG) are cleaved as a signal peptide. Residues 29–65 (GASNCGCLNGGKCVSYKYFSNIQRCSCPKKFQGEHCE) form the EGF-like domain. 12 disulfides stabilise this stretch: C33-C41, C35-C53, C55-C64, C72-C153, C93-C135, C124-C148, C179-C310, C220-C236, C228-C299, C324-C393, C356-C372, and C383-C411. The interval 36–59 (LNGGKCVSYKYFSNIQRCSCPKKF) is binds urokinase plasminogen activator surface receptor. In terms of domain architecture, Kringle spans 72–153 (CFEGNGHSYR…LVQECMVPNC (82 aa)). N-linked (GlcNAc...) asparagine glycosylation is present at N152. A connecting peptide region spans residues 154-189 (SGGESHRPAYDGKNPFSTPEKVEFQCGQKALRPRFK). The Peptidase S1 domain maps to 190-435 (IVGGKSTTIE…FLTWIHTHVG (246 aa)). Catalysis depends on charge relay system residues H235 and D286. The Charge relay system role is filled by S387.

This sequence belongs to the peptidase S1 family. As to quaternary structure, found in high and low molecular mass forms. Each consists of two chains, A and B. The high molecular mass form contains a long chain A which is cleaved to yield a short chain A. Forms heterodimer with SERPINA5. Binds LRP1B; binding is followed by internalization and degradation. Interacts with MRC2. Interacts with PLAUR. In complex with SERPINE1, interacts with PLAUR/uPAR. Interacts with SORL1 and LRP1, either alone or in complex with SERPINE1; these interactions are abolished in the presence of LRPAP1/RAP. The ternary complex composed of PLAUR-PLAU-PAI1 also interacts with SORLA. Post-translationally, produced as an inactive single-chain protein (pro-uPA or sc-uPA), is processed into the active disulfide-linked two-chain form of PLAU/uPA by a proteolytic event mediated, at least, by TMPRSS4.

The protein localises to the secreted. The catalysed reaction is Specific cleavage of Arg-|-Val bond in plasminogen to form plasmin.. With respect to regulation, inhibited by SERPINA5. Inhibited by SERPINE1. In terms of biological role, specifically cleaves the zymogen plasminogen to form the active enzyme plasmin. The chain is Urokinase-type plasminogen activator (PLAU) from Sus scrofa (Pig).